The chain runs to 1577 residues: MVQKKFCPRLLDYLVIVGARHPSSDSVAQTPELLRRYPLEDHPEFPLPPDVVFFCQPEGCLSVRQRRMSLRDDTSFVFTLTDKDTGVTRYGICVNFYRSFQKRMPKEKVEGGAGPRGKEGAHTSGASEEAATGSSESGSTLQPPSADSTPDINQSPWGKRRAKAGSRSRNSTLTSLCVLSHYPFFSTFRECLYTLKRLVDCCSERLLGKKLGIPRGVQRDTMWRIFTGSLLVEEKSSALLQDLREIEAWIYRLLRSPVPVSGQKRVDIEVLPQELQQALTFALPDPSRFTLVDFPLHLPLELLGVDACLQVLTCILLEHKVVLQSRDYNALSMSVMAFVAMIYPLEYMFPVIPLLPTCMASAEQLLLAPTPYIIGVPASFFLYKLDFKMPDDVWLVDLDSNRVIAPTNAEVLPILPEPESLELKKHLKQALASMSLNTQPILNLEKFHEGQEIPLLLGRPSNDLQSTPSTEFNPLIYGNDVDSVDVATRVAMVRFFNSANVLQGFQMHTRTLRLFPRPVVAFQAGSFLASRPRQTPFAEKLARTQAVEYFGEWILNPSNYAFQRIHNNTFDPALIGDKPKWYAHQLQPIHYRVYDGNSQLAEALSVPPERDSDSDPTEDSGSDSQDYDDSSSSYSSLGDFVSEMMKCDINGDTPNVDPLTHAALGDASEVEIDELQPQKEGEEPGPDSENSQENPPLRSSSSTTASSSPSTVVHSAHSEAADSTEMGDKATAGISKPLPPVPPSICKSTVDRRQTETGEGSVCQRTYDNPYFEPQYGFPPEEDEEEQGESYTPRFSQHVSGSRAQKLLRPNSLKLASDSDAESDSRASSPNSTVSNNSTEGFGGIMSFASSLYRNHSTSFSLSNLTLPTKGAREKTTPFPSLKVFGLNTLMEIVTEAGPGSGEGNRRALVDQKSSVIKHSPTVKREPSSPQGRSSNSSENQQFLKEVVHSVLDGQGVGWLNMKKVRRLLESEQLRVFVLSKLNRAVQSEDDARQDVIQDVEISRKVYKGMLDLLKCTVLSLEQSYAHAGLGGMASIFGLLEIAQTHYYSKEPDKRKRSPTENVNTPVGKDPGLAGRGDPKAMAQLRVPQLGPRAPSATGKGPKELDTRSLKEENFVASVELWNKHQEVKKQKALEKQRPEGIKPVFDLGETEEKKSQMSADSGVSLTSASQRTDQDSVIGVSPAVMIRSSSQDSEVSTVSNSSGETLGADSDLSSNAGDGPGGEGSAHLASSRATLSDSEIETNSATSAIFGKAHSLKPKEKPAGSPIRSSEDVSQRVYLYEGLLGRDKGSMWDQLEDAAMETFSLSKERSTLWDQMQFWEDAFLDAVMLEREGMGMDQGPQEMIDRYLSLGEHDRKRLEDDEDRLLATLLHNLISYMLLMKVNKNDIRKKVRRLMGKSHIGLVYSQQVNEVLDQLNSLNGRDLSIRSSGSRHMKKQTFVVHAGTDTNGDIFFMEVCDDCVVLRSNIGTVYERWWYEKLINMTYCPKTKVLCLWRRNGSETQLNKFYTKKCRELYYCVKDSMERAAARQQSIKPGPELGGEFPVQDMKTGEGGLLQVTLEGINLKFMHNQFLKLKKW.

The 255-residue stretch at 13-267 (YLVIVGARHP…VPVSGQKRVD (255 aa)) folds into the uDENN domain. Positions 106–121 (KEKVEGGAGPRGKEGA) are enriched in basic and acidic residues. The segment at 106 to 166 (KEKVEGGAGP…WGKRRAKAGS (61 aa)) is disordered. Low complexity predominate over residues 123–140 (TSGASEEAATGSSESGST). Over residues 141-156 (LQPPSADSTPDINQSP) the composition is skewed to polar residues. Serine 155 carries the post-translational modification Phosphoserine. The region spanning 288-428 (RFTLVDFPLH…ESLELKKHLK (141 aa)) is the cDENN domain. The region spanning 430 to 564 (ALASMSLNTQ…LNPSNYAFQR (135 aa)) is the dDENN domain. 2 disordered regions span residues 604 to 635 (LSVPPERDSDSDPTEDSGSDSQDYDDSSSSYS) and 676 to 840 (QPQK…NSTE). Positions 614–629 (SDPTEDSGSDSQDYDD) are enriched in acidic residues. A phosphoserine mark is found at serine 688 and serine 691. The segment covering 688 to 698 (SENSQENPPLR) has biased composition (polar residues). Low complexity predominate over residues 699-715 (SSSSTTASSSPSTVVHS). Polar residues predominate over residues 793–803 (PRFSQHVSGSR). Residues serine 812, serine 817, and serine 819 each carry the phosphoserine modification. Positions 826–839 (RASSPNSTVSNNST) are enriched in low complexity. Phosphoserine is present on residues serine 857, serine 861, serine 915, serine 920, serine 929, and serine 1058. Disordered stretches follow at residues 912 to 940 (QKSSVIKHSPTVKREPSSPQGRSSNSSEN), 1050 to 1109 (KEPD…DTRS), and 1127 to 1272 (EVKK…RSSE). Residues 928–938 (SSPQGRSSNSS) are compositionally biased toward low complexity. 2 positions are modified to phosphothreonine: threonine 1060 and threonine 1065. Serine 1109 bears the Phosphoserine mark. Over residues 1127–1141 (EVKKQKALEKQRPEG) the composition is skewed to basic and acidic residues. Polar residues predominate over residues 1157 to 1172 (QMSADSGVSLTSASQR). Residues 1189-1203 (SSSQDSEVSTVSNSS) are compositionally biased toward low complexity. Positions 1232–1248 (SRATLSDSEIETNSATS) are enriched in polar residues. At threonine 1235 the chain carries Phosphothreonine. 2 positions are modified to phosphoserine: serine 1237 and serine 1266. The region spanning 1336–1411 (GMDQGPQEMI…GLVYSQQVNE (76 aa)) is the Death domain.

The protein belongs to the MADD family. As to quaternary structure, interacts (via death domain) with TNFRSF1A (via death domain). Interacts with PIDD1. Interacts with YWHAZ. Interacts (via death domain) with KIF1B; links the motor KIF1B to Rab3-carrying vesicles in anterograde synaptic vesicle transport. Interacts with KIF1A. Interacts (via uDENN domain) with RAB3A, RAB3B, RAB3C and RAB3D; the GTP-bound form of the Rab proteins is preferred for interaction. Expressed in the brain.

It localises to the cell membrane. Its subcellular location is the cytoplasm. The protein resides in the cell projection. It is found in the axon. Its function is as follows. Guanyl-nucleotide exchange factor that regulates small GTPases of the Rab family. Converts GDP-bound inactive form of RAB27A and RAB27B to the GTP-bound active forms. Converts GDP-bound inactive form of RAB3A, RAB3C and RAB3D to the GTP-bound active forms, GTPases involved in synaptic vesicle exocytosis and vesicle secretion. Plays a role in synaptic vesicle formation and in vesicle trafficking at the neuromuscular junction. Involved in up-regulating a post-docking step of synaptic exocytosis in central synapses. Probably by binding to the motor proteins KIF1B and KIF1A, mediates motor-dependent transport of GTP-RAB3A-positive vesicles to the presynaptic nerve terminals. Plays a role in TNFA-mediated activation of the MAPK pathway, including ERK1/2. May link TNFRSF1A with MAP kinase activation. May be involved in the regulation of TNFA-induced apoptosis. The polypeptide is MAP kinase-activating death domain protein (Mus musculus (Mouse)).